We begin with the raw amino-acid sequence, 111 residues long: WAP four-disulfide core domain protein 12 (111 aa).

The first 23 residues, 1–23 (MGSSSFLVLMVSLTLVTLVAVEG), serve as a signal peptide directing secretion. The 48-residue stretch at 27–74 (DIEKAGVCPADNVRCFKSDPPQCHTDQDCLGERKCCYLHCGFKCVIPV) folds into the WAP domain. Intrachain disulfides connect C34–C62, C41–C66, C49–C61, and C55–C70. The tract at residues 80–111 (GGNKDEDVSRPYPEPGWEAKCPGSSSTRCPQK) is disordered. The segment covering 102–111 (GSSSTRCPQK) has biased composition (polar residues).

The protein resides in the secreted. Its function is as follows. Antibacterial protein. Putative acid-stable proteinase inhibitor. This is WAP four-disulfide core domain protein 12 (WFDC12) from Pan troglodytes (Chimpanzee).